Here is a 725-residue protein sequence, read N- to C-terminus: Homeobox protein unc-62 (725 aa).

The MEIS N-terminal domain maps to 133 to 218; that stretch reads SSDVCSSASF…PLDIVGDERA (86 aa). Disordered stretches follow at residues 214 to 258, 295 to 317, 329 to 359, 386 to 419, 491 to 555, and 615 to 661; these read GDER…PYEP, SSSS…LHST, VSSP…GNSM, SLHQ…PPPQ, VKME…KRKV, and IDQN…PDPT. A compositionally biased stretch (low complexity) spans 219-239; sequence SSSQPPMSPGSMGHHGHSGSP. Residues 388–400 are compositionally biased toward basic residues; it reads HQHHLHHPHHFPH. A compositionally biased stretch (low complexity) spans 498 to 508; it reads SVSSSKSGGKK. A compositionally biased stretch (polar residues) spans 541 to 550; sequence LSDSANGSQN. The segment at residues 552–614 is a DNA-binding region (homeobox; TALE-type); that stretch reads KRKVPKVFSK…NARRRIVQPM (63 aa).

It belongs to the TALE/MEIS homeobox family.

Its subcellular location is the nucleus. Functionally, acts redundantly with ceh-20 and ceh-40 to perform overlapping roles during embryogenesis. Required for postembryonic development of the ectoderm, including the Q, V and P cell lineages, playing a crucial role in ensuring that these cells and their descendants undergo their invariant patterns of cell division, migration, fusion and morphogenesis. Has a role in the mig-13 pathway to promote anterior migration of neuroblasts in the Q lineage. Required for multiple roles in regulating vulva development. The chain is Homeobox protein unc-62 (unc-62) from Caenorhabditis briggsae.